The primary structure comprises 121 residues: Pro-glucagon (121 aa).

The signal sequence occupies residues 1–21 (MKGAQYLAGLLLLLFVQNSIC). Residues 80-85 (SNGGSA) constitute a propeptide that is removed on maturation.

Belongs to the glucagon family.

It localises to the secreted. Functionally, plays a key role in glucose metabolism and homeostasis. Regulates blood glucose by increasing gluconeogenesis and decreasing glycolysis. This chain is Pro-glucagon (gcg), found in Carassius auratus (Goldfish).